The chain runs to 338 residues: tRNA N6-adenosine threonylcarbamoyltransferase (338 aa).

Residues His-111 and His-115 each contribute to the Fe cation site. Substrate-binding positions include 134-138 (VVSGG), Asp-167, Gly-180, Asp-184, and Asn-272. A Fe cation-binding site is contributed by Asp-300.

It belongs to the KAE1 / TsaD family. Fe(2+) is required as a cofactor.

Its subcellular location is the cytoplasm. It catalyses the reaction L-threonylcarbamoyladenylate + adenosine(37) in tRNA = N(6)-L-threonylcarbamoyladenosine(37) in tRNA + AMP + H(+). In terms of biological role, required for the formation of a threonylcarbamoyl group on adenosine at position 37 (t(6)A37) in tRNAs that read codons beginning with adenine. Is involved in the transfer of the threonylcarbamoyl moiety of threonylcarbamoyl-AMP (TC-AMP) to the N6 group of A37, together with TsaE and TsaB. TsaD likely plays a direct catalytic role in this reaction. In Syntrophus aciditrophicus (strain SB), this protein is tRNA N6-adenosine threonylcarbamoyltransferase.